A 550-amino-acid polypeptide reads, in one-letter code: CCR4-NOT transcription complex subunit 6-like-A (550 aa).

Positions 1–148 are required for interaction with cnot1, cnot3 and cnot7; the sequence is MPKEKYDPPD…LYQEPDGMRK (148 aa). LRR repeat units follow at residues 52–73, 75–96, 98–120, and 121–143; these read HLTV…IAKL, NLVY…LGNV, SLRE…GRLF, and RLQT…YQEP. The interval 153-550 is nuclease domain; sequence MLDNLSVHPE…INGVHLPSRR (398 aa). A Mg(2+)-binding site is contributed by glutamate 235. Residues glutamate 235, glutamate 271, histidine 355, and proline 360 each contribute to the substrate site. Aspartate 405 lines the Mg(2+) pocket. The Proton donor/acceptor role is filled by aspartate 405. Substrate contacts are provided by asparagine 407, asparagine 474, and phenylalanine 479.

It belongs to the CCR4/nocturin family. In terms of assembly, component of the CCR4-NOT complex. Mg(2+) is required as a cofactor.

It is found in the cytoplasm. The protein resides in the nucleus. The enzyme catalyses Exonucleolytic cleavage of poly(A) to 5'-AMP.. Its function is as follows. Poly(A) nuclease with 3'-5' RNase activity. Catalytic component of the CCR4-NOT complex which is one of the major cellular mRNA deadenylases and is linked to various cellular processes including bulk mRNA degradation, miRNA-mediated repression, translational repression during translational initiation and general transcription regulation. Additional complex functions may be a consequence of its influence on mRNA expression. The chain is CCR4-NOT transcription complex subunit 6-like-A (cnot6l-a) from Xenopus laevis (African clawed frog).